The chain runs to 162 residues: Phosphopantetheine adenylyltransferase (162 aa).

Position 10 (threonine 10) interacts with substrate. ATP contacts are provided by residues 10-11 and histidine 18; that span reads TF. Residues lysine 42, leucine 74, and arginine 88 each contribute to the substrate site. ATP-binding positions include 89–91, glutamate 99, and 124–130; these read GLR and YAFLSSS.

Belongs to the bacterial CoaD family. As to quaternary structure, homohexamer. Requires Mg(2+) as cofactor.

The protein resides in the cytoplasm. The catalysed reaction is (R)-4'-phosphopantetheine + ATP + H(+) = 3'-dephospho-CoA + diphosphate. The protein operates within cofactor biosynthesis; coenzyme A biosynthesis; CoA from (R)-pantothenate: step 4/5. Reversibly transfers an adenylyl group from ATP to 4'-phosphopantetheine, yielding dephospho-CoA (dPCoA) and pyrophosphate. The chain is Phosphopantetheine adenylyltransferase from Methylococcus capsulatus (strain ATCC 33009 / NCIMB 11132 / Bath).